We begin with the raw amino-acid sequence, 602 residues long: Lysine--tRNA ligase, chloroplastic/mitochondrial (602 aa).

The segment covering 50–62 (SSSSSSATTAETS) has biased composition (low complexity). Positions 50–83 (SSSSSSATTAETSKPSGRNRRSASSSNSTSDREA) are disordered. Residues 136 to 214 (VSIAGRVVAR…SICVNSFSIL (79 aa)) constitute a DNA-binding region (OB). Substrate is bound by residues Gly-285 and Glu-309. Residues 331–333 (RNE) and 339–340 (HN) contribute to the ATP site. Glu-347 and Tyr-349 together coordinate substrate. Residues Glu-492 and Glu-499 each coordinate Ca(2+). 499-500 (EM) contacts ATP. 2 residues coordinate substrate: Asn-502 and Glu-506. Over residues 524-543 (HNAKRAEAVRESPEPNAKKD) the composition is skewed to basic and acidic residues. Residues 524 to 550 (HNAKRAEAVRESPEPNAKKDDDDDESY) are disordered. An ATP-binding site is contributed by 575–578 (GIDR).

Belongs to the class-II aminoacyl-tRNA synthetase family. Ca(2+) serves as cofactor.

It is found in the plastid. The protein localises to the chloroplast. The protein resides in the mitochondrion. It catalyses the reaction tRNA(Lys) + L-lysine + ATP = L-lysyl-tRNA(Lys) + AMP + diphosphate. Its function is as follows. Catalyzes the specific attachment of an amino acid to its cognate tRNA in a 2 step reaction: the amino acid (AA) is first activated by ATP to form AA-AMP and then transferred to the acceptor end of the tRNA. In Arabidopsis thaliana (Mouse-ear cress), this protein is Lysine--tRNA ligase, chloroplastic/mitochondrial.